We begin with the raw amino-acid sequence, 192 residues long: Anthranilate synthase component 2 (192 aa).

The Glutamine amidotransferase type-1 domain occupies 1-192; the sequence is MIVLVNNRDS…KNFVEMSRNG (192 aa). Residue 50–52 coordinates L-glutamine; that stretch reads GPG. Cys-78 serves as the catalytic Nucleophile; for GATase activity. L-glutamine-binding positions include Gln-82 and 127 to 128; that span reads SL. Residues His-165 and Glu-167 each act as for GATase activity in the active site.

In terms of assembly, heterotetramer consisting of two non-identical subunits: a beta subunit (TrpG) and a large alpha subunit (TrpE).

It catalyses the reaction chorismate + L-glutamine = anthranilate + pyruvate + L-glutamate + H(+). The protein operates within amino-acid biosynthesis; L-tryptophan biosynthesis; L-tryptophan from chorismate: step 1/5. Part of a heterotetrameric complex that catalyzes the two-step biosynthesis of anthranilate, an intermediate in the biosynthesis of L-tryptophan. In the first step, the glutamine-binding beta subunit (TrpG) of anthranilate synthase (AS) provides the glutamine amidotransferase activity which generates ammonia as a substrate that, along with chorismate, is used in the second step, catalyzed by the large alpha subunit of AS (TrpE) to produce anthranilate. In the absence of TrpG, TrpE can synthesize anthranilate directly from chorismate and high concentrations of ammonia. In Thermococcus kodakarensis (strain ATCC BAA-918 / JCM 12380 / KOD1) (Pyrococcus kodakaraensis (strain KOD1)), this protein is Anthranilate synthase component 2 (trpG).